The following is a 124-amino-acid chain: Phosphoribosyl-AMP cyclohydrolase (124 aa).

Asp82 provides a ligand contact to Mg(2+). Cys83 is a binding site for Zn(2+). Mg(2+) contacts are provided by Asp84 and Asp86. Residues Cys99 and Cys106 each contribute to the Zn(2+) site.

Belongs to the PRA-CH family. As to quaternary structure, homodimer. Requires Mg(2+) as cofactor. It depends on Zn(2+) as a cofactor.

Its subcellular location is the cytoplasm. The enzyme catalyses 1-(5-phospho-beta-D-ribosyl)-5'-AMP + H2O = 1-(5-phospho-beta-D-ribosyl)-5-[(5-phospho-beta-D-ribosylamino)methylideneamino]imidazole-4-carboxamide. Its pathway is amino-acid biosynthesis; L-histidine biosynthesis; L-histidine from 5-phospho-alpha-D-ribose 1-diphosphate: step 3/9. Its function is as follows. Catalyzes the hydrolysis of the adenine ring of phosphoribosyl-AMP. The protein is Phosphoribosyl-AMP cyclohydrolase of Zymomonas mobilis subsp. mobilis (strain ATCC 31821 / ZM4 / CP4).